Here is a 264-residue protein sequence, read N- to C-terminus: COP9 signalosome complex subunit 7b (264 aa).

Position 2 is an N-acetylalanine (Ala2). One can recognise a PCI domain in the interval 2 to 159 (AGEQKPSSNL…QLLEVDFCIG (158 aa)). The stretch at 188-237 (IEQQVLRANQYKENHNRTQQQVEAEVTNIKKTLKATASSSAQEMEQQLAE) forms a coiled coil. Over residues 223 to 232 (TASSSAQEME) the composition is skewed to polar residues. A disordered region spans residues 223 to 264 (TASSSAQEMEQQLAERECPPHAEQRQPTKKMSKVKGLVSSRH). Basic and acidic residues predominate over residues 235–248 (LAERECPPHAEQRQ). Ser261 carries the post-translational modification Phosphothreonine. A Phosphoserine modification is found at Arg263.

The protein belongs to the CSN7/EIF3M family. CSN7 subfamily. As to quaternary structure, component of the CSN complex, composed of COPS1/GPS1, COPS2, COPS3, COPS4, COPS5, COPS6, COPS7 (COPS7A or COPS7B), COPS8 and COPS9 isoform 1. In the complex, it probably interacts directly with COPS1, COPS2, COPS4, COPS5, COPS6 and COPS8. Interacts with EIF3S6. In terms of assembly, (Microbial infection) Interacts with vaccinia virus protein C9L.

It localises to the cytoplasm. Its subcellular location is the nucleus. Its function is as follows. Component of the COP9 signalosome complex (CSN), a complex involved in various cellular and developmental processes. The CSN complex is an essential regulator of the ubiquitin (Ubl) conjugation pathway by mediating the deneddylation of the cullin subunits of SCF-type E3 ligase complexes, leading to decrease the Ubl ligase activity of SCF-type complexes such as SCF, CSA or DDB2. The complex is also involved in phosphorylation of p53/TP53, JUN, I-kappa-B-alpha/NFKBIA, ITPK1 and IRF8/ICSBP, possibly via its association with CK2 and PKD kinases. CSN-dependent phosphorylation of TP53 and JUN promotes and protects degradation by the Ubl system, respectively. This chain is COP9 signalosome complex subunit 7b (COPS7B), found in Homo sapiens (Human).